A 383-amino-acid polypeptide reads, in one-letter code: Putative F-box protein At4g09190 (383 aa).

An F-box domain is found at 16–67 (RSQREHIPLDLIVEIVSSLPAKSIVRFRSVSKLWSSIITTPDFTSSVVTRSL).

This chain is Putative F-box protein At4g09190, found in Arabidopsis thaliana (Mouse-ear cress).